The sequence spans 440 residues: Peroxisome proliferator-activated receptor delta (440 aa).

The interval 1–53 (MEQPQEETPEAREEEKEEVAMGDGAPELNGGPEHTLPSSSCADLSQNSSPSSL) is disordered. Residues 36–53 (LPSSSCADLSQNSSPSSL) are compositionally biased toward polar residues. Positions 70 to 144 (NMECRVCGDK…LGMSHNAIRF (75 aa)) form a DNA-binding region, nuclear receptor. NR C4-type zinc fingers lie at residues 73-93 (CRVC…CEGC) and 110-132 (CDRI…FQKC). The region spanning 210-438 (FVIHDIETLW…HPLLQEIYKD (229 aa)) is the NR LBD domain.

This sequence belongs to the nuclear hormone receptor family. NR1 subfamily. Heterodimer with the retinoid X receptor. Interacts (via domain NR LBD) with CRY1 and CRY2 in a ligand-dependent manner. 'Lys-48'-linked polyubiquitinated; leading to proteasomal degradation. Deubiquitinated and stabilized by OTUD3. In terms of tissue distribution, heart, adrenal and intestine.

It is found in the nucleus. In terms of biological role, ligand-activated transcription factor key mediator of energy metabolism in adipose tissues. Receptor that binds peroxisome proliferators such as hypolipidemic drugs and fatty acids. Has a preference for poly-unsaturated fatty acids, such as gamma-linoleic acid and eicosapentanoic acid. Once activated by a ligand, the receptor binds to promoter elements of target genes. Regulates the peroxisomal beta-oxidation pathway of fatty acids. Functions as transcription activator for the acyl-CoA oxidase gene. Decreases expression of NPC1L1 once activated by a ligand. The sequence is that of Peroxisome proliferator-activated receptor delta (Ppard) from Mus musculus (Mouse).